The following is a 183-amino-acid chain: NAD(P)H-quinone oxidoreductase subunit I, chloroplastic (183 aa).

4Fe-4S ferredoxin-type domains follow at residues 55–84 and 95–124; these read GRIH…VDWE and TSYS…MTEE. Residues C64, C67, C70, C74, C104, C107, C110, and C114 each contribute to the [4Fe-4S] cluster site.

Belongs to the complex I 23 kDa subunit family. NDH is composed of at least 16 different subunits, 5 of which are encoded in the nucleus. It depends on [4Fe-4S] cluster as a cofactor.

It localises to the plastid. The protein resides in the chloroplast thylakoid membrane. The catalysed reaction is a plastoquinone + NADH + (n+1) H(+)(in) = a plastoquinol + NAD(+) + n H(+)(out). It catalyses the reaction a plastoquinone + NADPH + (n+1) H(+)(in) = a plastoquinol + NADP(+) + n H(+)(out). Its function is as follows. NDH shuttles electrons from NAD(P)H:plastoquinone, via FMN and iron-sulfur (Fe-S) centers, to quinones in the photosynthetic chain and possibly in a chloroplast respiratory chain. The immediate electron acceptor for the enzyme in this species is believed to be plastoquinone. Couples the redox reaction to proton translocation, and thus conserves the redox energy in a proton gradient. In Huperzia lucidula (Shining clubmoss), this protein is NAD(P)H-quinone oxidoreductase subunit I, chloroplastic.